Reading from the N-terminus, the 356-residue chain is A-type ATP synthase subunit C (356 aa).

This sequence belongs to the V-ATPase V0D/AC39 subunit family. As to quaternary structure, has multiple subunits with at least A(3), B(3), C, D, E, F, H, I and proteolipid K(x).

The protein resides in the cell membrane. Its function is as follows. Component of the A-type ATP synthase that produces ATP from ADP in the presence of a proton gradient across the membrane. In Thermoplasma acidophilum (strain ATCC 25905 / DSM 1728 / JCM 9062 / NBRC 15155 / AMRC-C165), this protein is A-type ATP synthase subunit C.